The sequence spans 474 residues: bZIP transcription factor hapX (474 aa).

Residues 1 to 10 (MSTSAGTPTS) are compositionally biased toward polar residues. A disordered region spans residues 1–82 (MSTSAGTPTS…RKAQNRAAQR (82 aa)). One can recognise a bZIP domain in the interval 67–108 (DTPPTKRKAQNRAAQRAFRERRAARVGELEEQIKKIEEENER). The interval 72–91 (KRKAQNRAAQRAFRERRAAR) is basic motif. The leucine-zipper stretch occupies residues 95–102 (LEEQIKKI). Disordered stretches follow at residues 201-242 (QMQT…TDFT), 282-317 (EDQP…GDVL), and 429-449 (TLPN…LTNR). A compositionally biased stretch (polar residues) spans 287 to 307 (DRSNQPSQLTKLPPIQNISQF).

It belongs to the bZIP family. YAP subfamily.

Its subcellular location is the nucleus. Iron regulator crucial for the adaptation to iron starvation and iron excess, but is dispensable for virulence. SreA represses the expression of hapX and the siderophore system during iron sufficient conditions by an iron-sensing mechanism, while hapX represses sreA and activates the siderophore system during iron-limiting conditions, resulting in efficient iron uptake and inhibition of iron-consuming pathways. HapX targets include genes encoding a number of key iron-regulated factors such as the vacuolar iron importer cccA, as well as hemA, cycA and lysF involved in heme biosynthesis, respiration and lysine biosynthesis, respectively. Activation of the vacuolar iron importer cccA during high iron conditions is essential for iron detoxification. The chain is bZIP transcription factor hapX from Arthroderma benhamiae (strain ATCC MYA-4681 / CBS 112371) (Trichophyton mentagrophytes).